A 162-amino-acid polypeptide reads, in one-letter code: uncharacterized protein (162 aa).

Positions 129–161 (DLNAVLKNLKEVEKKSLKISKEELKKKLDQILG) form a coiled coil.

This is an uncharacterized protein from Aquifex aeolicus (strain VF5).